Consider the following 198-residue polypeptide: Peptide methionine sulfoxide reductase MsrA 2 (198 aa).

Residue Cys-32 is part of the active site.

This sequence belongs to the MsrA Met sulfoxide reductase family.

It carries out the reaction L-methionyl-[protein] + [thioredoxin]-disulfide + H2O = L-methionyl-(S)-S-oxide-[protein] + [thioredoxin]-dithiol. The catalysed reaction is [thioredoxin]-disulfide + L-methionine + H2O = L-methionine (S)-S-oxide + [thioredoxin]-dithiol. In terms of biological role, has an important function as a repair enzyme for proteins that have been inactivated by oxidation. Catalyzes the reversible oxidation-reduction of methionine sulfoxide in proteins to methionine. The chain is Peptide methionine sulfoxide reductase MsrA 2 (msrA2) from Rhizobium meliloti (strain 1021) (Ensifer meliloti).